The primary structure comprises 334 residues: tRNA U34 carboxymethyltransferase (334 aa).

Residues Lys91, Trp105, Lys110, Gly130, 152–154 (DPT), 181–182 (IE), Met196, Tyr200, and Arg315 each bind carboxy-S-adenosyl-L-methionine.

The protein belongs to the class I-like SAM-binding methyltransferase superfamily. CmoB family. Homotetramer.

The catalysed reaction is carboxy-S-adenosyl-L-methionine + 5-hydroxyuridine(34) in tRNA = 5-carboxymethoxyuridine(34) in tRNA + S-adenosyl-L-homocysteine + H(+). Its function is as follows. Catalyzes carboxymethyl transfer from carboxy-S-adenosyl-L-methionine (Cx-SAM) to 5-hydroxyuridine (ho5U) to form 5-carboxymethoxyuridine (cmo5U) at position 34 in tRNAs. The protein is tRNA U34 carboxymethyltransferase of Klebsiella pneumoniae (strain 342).